Consider the following 700-residue polypeptide: Methionine--tRNA ligase (700 aa).

A 'HIGH' region motif is present at residues 14–24 (PYANGPVHLGH). Residues C146, C149, C159, and C162 each contribute to the Zn(2+) site. A 'KMSKS' region motif is present at residues 344–348 (KFSKS). K347 is an ATP binding site. In terms of domain architecture, tRNA-binding spans 599–700 (DFLKVDLRVA…GEEINGRQIQ (102 aa)).

Belongs to the class-I aminoacyl-tRNA synthetase family. MetG type 1 subfamily. Homodimer. Requires Zn(2+) as cofactor.

The protein resides in the cytoplasm. The enzyme catalyses tRNA(Met) + L-methionine + ATP = L-methionyl-tRNA(Met) + AMP + diphosphate. Functionally, is required not only for elongation of protein synthesis but also for the initiation of all mRNA translation through initiator tRNA(fMet) aminoacylation. This chain is Methionine--tRNA ligase, found in Pelodictyon phaeoclathratiforme (strain DSM 5477 / BU-1).